Consider the following 91-residue polypeptide: MKVKVTLSAVQFRSLVDYESRSFHLDLGEGSTLGDAVRAVEEMLSAEIEPLLERGNVRIMMNNSLVDYQKEKNRVLNDGDALIFITPISGG.

This is an uncharacterized protein from Archaeoglobus fulgidus (strain ATCC 49558 / DSM 4304 / JCM 9628 / NBRC 100126 / VC-16).